A 461-amino-acid polypeptide reads, in one-letter code: L-seryl-tRNA(Sec) selenium transferase (461 aa).

At K291 the chain carries N6-(pyridoxal phosphate)lysine.

This sequence belongs to the SelA family. Requires pyridoxal 5'-phosphate as cofactor.

Its subcellular location is the cytoplasm. The enzyme catalyses L-seryl-tRNA(Sec) + selenophosphate + H(+) = L-selenocysteinyl-tRNA(Sec) + phosphate. It functions in the pathway aminoacyl-tRNA biosynthesis; selenocysteinyl-tRNA(Sec) biosynthesis; selenocysteinyl-tRNA(Sec) from L-seryl-tRNA(Sec) (bacterial route): step 1/1. Its function is as follows. Converts seryl-tRNA(Sec) to selenocysteinyl-tRNA(Sec) required for selenoprotein biosynthesis. The sequence is that of L-seryl-tRNA(Sec) selenium transferase from Caldanaerobacter subterraneus subsp. tengcongensis (strain DSM 15242 / JCM 11007 / NBRC 100824 / MB4) (Thermoanaerobacter tengcongensis).